We begin with the raw amino-acid sequence, 64 residues long: Large ribosomal subunit protein uL30 (64 aa).

Belongs to the universal ribosomal protein uL30 family. Part of the 50S ribosomal subunit.

This chain is Large ribosomal subunit protein uL30, found in Beijerinckia indica subsp. indica (strain ATCC 9039 / DSM 1715 / NCIMB 8712).